A 411-amino-acid chain; its full sequence is Protein-lysine 6-oxidase (411 aa).

The signal sequence occupies residues 1–21; that stretch reads MRFAWTVLFLGQLQFCPLLRC. Residues 22-162 constitute a propeptide, removed by BMP1; sequence APQAPREPPA…PPSHVDRMVG (141 aa). The interval 60 to 168 is disordered; sequence PQRRRDSSAT…RMVGDDPYNP (109 aa). Residues asparagine 91 and asparagine 138 are each glycosylated (N-linked (GlcNAc...) asparagine). Tyrosine 181 bears the Sulfotyrosine mark. Residues 207–411 are lysyl-oxidase like; the sequence is PDLVPDPYYI…YASGCTISPY (205 aa). 5 cysteine pairs are disulfide-bonded: cysteine 232/cysteine 238, cysteine 285/cysteine 334, cysteine 318/cysteine 324, cysteine 345/cysteine 355, and cysteine 392/cysteine 406. Residues histidine 286, histidine 288, and histidine 290 each contribute to the Cu cation site. A cross-link (lysine tyrosylquinone (Lys-Tyr)) is located at residues 314-349; that stretch reads KASFCLEDTSCDYGYHRRFACTAHTQGLSPGCYDTY. At tyrosine 349 the chain carries 2',4',5'-topaquinone.

The protein belongs to the lysyl oxidase family. Interacts with MFAP4. Interacts (via propeptide) with EFEMP2; this interaction is strong and facilitates formation of ternary complexes with ELN during elastic fiber assembly; this interaction limits interaction of EFEMP2 with FBLN5. It depends on Cu cation as a cofactor. Requires lysine tyrosylquinone residue as cofactor. In terms of processing, the lysine tyrosylquinone cross-link (LTQ) is generated by condensation of the epsilon-amino group of a lysine with a topaquinone produced by oxidation of tyrosine. Post-translationally, proteolytically cleaved by BMP1 which removes the propeptide. Also proteolytically cleaved by ADAMTS2 and ADAMTS14, but not by ADAMTS3, at an additional cleavage site downstream of the BMP1 cleavage site. The propeptide plays a role in directing the deposition of this enzyme to elastic fibers, via interaction with tropoelastin. Cleavage by BMP1 to remove the propeptide does not increase enzymatic activity but increases binding to collagen. Cleavage by ADAMTS2 produces a form with reduced collagen-binding activity. Sulfated at Tyr-181 and also at either Tyr-177 or Tyr-178 which enhances binding to collagen. Aorta and lung.

It is found in the secreted. It localises to the extracellular space. It catalyses the reaction L-lysyl-[protein] + O2 + H2O = (S)-2-amino-6-oxohexanoyl-[protein] + H2O2 + NH4(+). Responsible for the post-translational oxidative deamination of peptidyl lysine residues in precursors to fibrous collagen and elastin. Regulator of Ras expression. May play a role in tumor suppression. Plays a role in the aortic wall architecture. The polypeptide is Protein-lysine 6-oxidase (Rattus norvegicus (Rat)).